The chain runs to 252 residues: Imidazole glycerol phosphate synthase subunit HisF (252 aa).

Active-site residues include Asp11 and Asp130.

It belongs to the HisA/HisF family. In terms of assembly, heterodimer of HisH and HisF.

It is found in the cytoplasm. It catalyses the reaction 5-[(5-phospho-1-deoxy-D-ribulos-1-ylimino)methylamino]-1-(5-phospho-beta-D-ribosyl)imidazole-4-carboxamide + L-glutamine = D-erythro-1-(imidazol-4-yl)glycerol 3-phosphate + 5-amino-1-(5-phospho-beta-D-ribosyl)imidazole-4-carboxamide + L-glutamate + H(+). It functions in the pathway amino-acid biosynthesis; L-histidine biosynthesis; L-histidine from 5-phospho-alpha-D-ribose 1-diphosphate: step 5/9. Its function is as follows. IGPS catalyzes the conversion of PRFAR and glutamine to IGP, AICAR and glutamate. The HisF subunit catalyzes the cyclization activity that produces IGP and AICAR from PRFAR using the ammonia provided by the HisH subunit. The sequence is that of Imidazole glycerol phosphate synthase subunit HisF from Syntrophomonas wolfei subsp. wolfei (strain DSM 2245B / Goettingen).